A 45-amino-acid polypeptide reads, in one-letter code: Large ribosomal subunit protein bL34 (45 aa).

The disordered stretch occupies residues 1–45; the sequence is MTKRTFGGTSRKRKRVSGFRVRMRSHTGRRVVRTRRKRGRSRLTV. Positions 10-45 are enriched in basic residues; sequence SRKRKRVSGFRVRMRSHTGRRVVRTRRKRGRSRLTV.

Belongs to the bacterial ribosomal protein bL34 family.

This chain is Large ribosomal subunit protein bL34, found in Prochlorococcus marinus (strain NATL2A).